A 513-amino-acid polypeptide reads, in one-letter code: Mannosyl-oligosaccharide alpha-1,2-mannosidase 1B (513 aa).

The first 21 residues, 1 to 21 (MHLPSLSLSLTALAIASPSAA), serve as a signal peptide directing secretion. N-linked (GlcNAc...) asparagine glycosylation is found at asparagine 97, asparagine 117, asparagine 150, asparagine 184, asparagine 251, asparagine 322, asparagine 348, and asparagine 368. Cysteine 334 and cysteine 363 are joined by a disulfide. Glutamate 377 acts as the Proton donor in catalysis. Threonine 503 contributes to the Ca(2+) binding site.

Belongs to the glycosyl hydrolase 47 family. In terms of assembly, monomer. Requires Ca(2+) as cofactor. Mg(2+) serves as cofactor.

The protein localises to the cytoplasmic vesicle lumen. It catalyses the reaction N(4)-(alpha-D-Man-(1-&gt;2)-alpha-D-Man-(1-&gt;2)-alpha-D-Man-(1-&gt;3)-[alpha-D-Man-(1-&gt;2)-alpha-D-Man-(1-&gt;3)-[alpha-D-Man-(1-&gt;2)-alpha-D-Man-(1-&gt;6)]-alpha-D-Man-(1-&gt;6)]-beta-D-Man-(1-&gt;4)-beta-D-GlcNAc-(1-&gt;4)-beta-D-GlcNAc)-L-asparaginyl-[protein] (N-glucan mannose isomer 9A1,2,3B1,2,3) + 4 H2O = N(4)-(alpha-D-Man-(1-&gt;3)-[alpha-D-Man-(1-&gt;3)-[alpha-D-Man-(1-&gt;6)]-alpha-D-Man-(1-&gt;6)]-beta-D-Man-(1-&gt;4)-beta-D-GlcNAc-(1-&gt;4)-beta-D-GlcNAc)-L-asparaginyl-[protein] (N-glucan mannose isomer 5A1,2) + 4 beta-D-mannose. It carries out the reaction N(4)-(alpha-D-Man-(1-&gt;2)-alpha-D-Man-(1-&gt;2)-alpha-D-Man-(1-&gt;3)-[alpha-D-Man-(1-&gt;3)-[alpha-D-Man-(1-&gt;2)-alpha-D-Man-(1-&gt;6)]-alpha-D-Man-(1-&gt;6)]-beta-D-Man-(1-&gt;4)-beta-D-GlcNAc-(1-&gt;4)-beta-D-GlcNAc)-L-asparaginyl-[protein] (N-glucan mannose isomer 8A1,2,3B1,3) + 3 H2O = N(4)-(alpha-D-Man-(1-&gt;3)-[alpha-D-Man-(1-&gt;3)-[alpha-D-Man-(1-&gt;6)]-alpha-D-Man-(1-&gt;6)]-beta-D-Man-(1-&gt;4)-beta-D-GlcNAc-(1-&gt;4)-beta-D-GlcNAc)-L-asparaginyl-[protein] (N-glucan mannose isomer 5A1,2) + 3 beta-D-mannose. Its pathway is protein modification; protein glycosylation. Involved in the maturation of Asn-linked oligosaccharides. Progressively trims alpha-1,2-linked mannose residues from Man(9)GlcNAc(2) to produce Man(5)GlcNAc(2). This Aspergillus phoenicis (Aspergillus saitoi) protein is Mannosyl-oligosaccharide alpha-1,2-mannosidase 1B (mns1B).